The sequence spans 220 residues: Deoxyribose-phosphate aldolase (220 aa).

The Proton donor/acceptor role is filled by Asp89. The active-site Schiff-base intermediate with acetaldehyde is Lys151. Lys180 (proton donor/acceptor) is an active-site residue.

This sequence belongs to the DeoC/FbaB aldolase family. DeoC type 1 subfamily.

It localises to the cytoplasm. The catalysed reaction is 2-deoxy-D-ribose 5-phosphate = D-glyceraldehyde 3-phosphate + acetaldehyde. Its pathway is carbohydrate degradation; 2-deoxy-D-ribose 1-phosphate degradation; D-glyceraldehyde 3-phosphate and acetaldehyde from 2-deoxy-alpha-D-ribose 1-phosphate: step 2/2. In terms of biological role, catalyzes a reversible aldol reaction between acetaldehyde and D-glyceraldehyde 3-phosphate to generate 2-deoxy-D-ribose 5-phosphate. In Streptococcus pneumoniae (strain CGSP14), this protein is Deoxyribose-phosphate aldolase.